A 240-amino-acid polypeptide reads, in one-letter code: ATP synthase subunit a 1 (240 aa).

5 consecutive transmembrane segments (helical) span residues 23 to 43, 82 to 102, 120 to 140, 186 to 206, and 207 to 227; these read GQVL…SVLA, VPFI…GALF, DINT…YAGF, LVVA…VMLL, and GLFT…AYIH.

It belongs to the ATPase A chain family. As to quaternary structure, F-type ATPases have 2 components, CF(1) - the catalytic core - and CF(0) - the membrane proton channel. CF(1) has five subunits: alpha(3), beta(3), gamma(1), delta(1), epsilon(1). CF(0) has four main subunits: a, b, b' and c.

Its subcellular location is the cellular thylakoid membrane. Functionally, key component of the proton channel; it plays a direct role in the translocation of protons across the membrane. This chain is ATP synthase subunit a 1, found in Acaryochloris marina (strain MBIC 11017).